An 840-amino-acid polypeptide reads, in one-letter code: Cullin-4 (840 aa).

Polar residues predominate over residues M1–T11. Residues M1–T82 form a disordered region. Basic and acidic residues predominate over residues T33 to G48. Residues F69 to T82 are compositionally biased toward polar residues. The Cullin neddylation domain occupies D772–E831. Residue K786 forms a Glycyl lysine isopeptide (Lys-Gly) (interchain with G-Cter in NEDD8) linkage.

Belongs to the cullin family. As to quaternary structure, part of an E3 ubiquitin-protein ligase complex including cul-4 and ddb-1. In terms of processing, neddylated. Deneddylated via its interaction with the COP9 signalosome (CSN) complex.

It participates in protein modification; protein ubiquitination. In terms of biological role, component of cullin-based E3 ubiquitin-protein ligase complexes which mediate the ubiquitination and subsequent proteasomal degradation of target proteins. The functional specificity of the E3 ubiquitin-protein ligase complex depends on the variable substrate recognition component. In association with ddb-1 directs ubiquitination of cdt-1 during S phase and is required for restraining DNA rereplication. Probably is involved in ubiquitination of cki-1. The polypeptide is Cullin-4 (cul-4) (Caenorhabditis elegans).